A 388-amino-acid polypeptide reads, in one-letter code: MNLHEYQAKQIFAEYQLPVGKGYACKSADEAADAIKKLNGDVWVAKCQVHAGGRGKAGGVKLVRNEAEVRAFADQWLGQRLVTFQTDVNGQPVNTLYVEEGSSIARELYLGAVLDRASQRVVFMVSTEGGVNIEEVAEKTPHLLHKMAIDPLTGGMPYQGRELAFKLGLKGDQIKQFAHIFVQMAKMFVEKDLALLEVNPLVVTKEGNLLCLDAKIVVDSNALYRQPALKAMQDPSQEDPREALAESHQLNYVALEGNIGCMVNGAGLAMGTMDIIKLHGGQPANFLDVGGGATKERVAEAFKIILSDSAVKAVLVNIFGGIVRCDLIAEGIIAAVNEVGVNVPVVVRLEGNNAPLGREILANSGVNIIAANTLTDAAIQAVKAAEGK.

The ATP-grasp domain occupies 9 to 244 (KQIFAEYQLP…PSQEDPREAL (236 aa)). Residues K46, 53–55 (GRG), E99, S102, and E107 contribute to the ATP site. Residues N199 and D213 each coordinate Mg(2+). Substrate-binding positions include N264 and 321–323 (GIV).

This sequence belongs to the succinate/malate CoA ligase beta subunit family. As to quaternary structure, heterotetramer of two alpha and two beta subunits. It depends on Mg(2+) as a cofactor.

The enzyme catalyses succinate + ATP + CoA = succinyl-CoA + ADP + phosphate. It carries out the reaction GTP + succinate + CoA = succinyl-CoA + GDP + phosphate. The protein operates within carbohydrate metabolism; tricarboxylic acid cycle; succinate from succinyl-CoA (ligase route): step 1/1. Functionally, succinyl-CoA synthetase functions in the citric acid cycle (TCA), coupling the hydrolysis of succinyl-CoA to the synthesis of either ATP or GTP and thus represents the only step of substrate-level phosphorylation in the TCA. The beta subunit provides nucleotide specificity of the enzyme and binds the substrate succinate, while the binding sites for coenzyme A and phosphate are found in the alpha subunit. The polypeptide is Succinate--CoA ligase [ADP-forming] subunit beta (Pasteurella multocida (strain Pm70)).